The chain runs to 502 residues: Probable malate:quinone oxidoreductase (502 aa).

It belongs to the MQO family. The cofactor is FAD.

It carries out the reaction (S)-malate + a quinone = a quinol + oxaloacetate. It participates in carbohydrate metabolism; tricarboxylic acid cycle; oxaloacetate from (S)-malate (quinone route): step 1/1. The sequence is that of Probable malate:quinone oxidoreductase from Oceanobacillus iheyensis (strain DSM 14371 / CIP 107618 / JCM 11309 / KCTC 3954 / HTE831).